The following is a 263-amino-acid chain: Hydroxyacylglutathione hydrolase (263 aa).

H55, H57, D59, H60, H117, D134, and H172 together coordinate Zn(2+).

Belongs to the metallo-beta-lactamase superfamily. Glyoxalase II family. As to quaternary structure, monomer. Zn(2+) is required as a cofactor.

The enzyme catalyses an S-(2-hydroxyacyl)glutathione + H2O = a 2-hydroxy carboxylate + glutathione + H(+). Its pathway is secondary metabolite metabolism; methylglyoxal degradation; (R)-lactate from methylglyoxal: step 2/2. Thiolesterase that catalyzes the hydrolysis of S-D-lactoyl-glutathione to form glutathione and D-lactic acid. The polypeptide is Hydroxyacylglutathione hydrolase (Shewanella baltica (strain OS185)).